The sequence spans 566 residues: Amino acid transporter 6-1 (566 aa).

A run of 11 helical transmembrane segments spans residues 65-85, 137-157, 158-178, 187-207, 216-236, 250-270, 334-354, 367-387, 392-412, 423-443, and 455-475; these read YVLL…FYGW, MTFA…DWLG, PLWT…FLAF, YPAL…TLCI, GLII…PLVL, VSIG…LLFM, FFSI…WATS, DVVS…ILLG, VVGI…TYVF, LSAC…YVYV, and LIGI…PLYE. A glycan (N-linked (GlcNAc...) asparagine) is linked at Asn476. Residues 489–509 traverse the membrane as a helical segment; the sequence is IQIAMTALLCVQYVWIFILGF.

This sequence belongs to the SLC43A transporter (TC 2.A.1.44) family.

It localises to the cell membrane. The catalysed reaction is L-lysine(in) = L-lysine(out). It carries out the reaction L-arginine(in) = L-arginine(out). The enzyme catalyses L-methionine(in) = L-methionine(out). It catalyses the reaction L-leucine(in) = L-leucine(out). Functionally, cationic and neutral amino acid transporter. Transports lysine with high affinity. Can transport arginine, methionine and leucine. Does not require inorganic ions, such as sodium, chloride, potassium, calcium or magnesium, for transport activity. The sequence is that of Amino acid transporter 6-1 from Toxoplasma gondii (strain ATCC 50611 / Me49).